The chain runs to 122 residues: Piercer of microtubule wall 2 protein (122 aa).

The segment covering 1 to 23 has biased composition (basic and acidic residues); the sequence is MARETDCDLDKKTSLTSDAEMRP. 2 disordered regions span residues 1-26 and 99-122; these read MARETDCDLDKKTSLTSDAEMRPEPP and QNNSLNVGPDRTRTIDSPNYQHTL. Residues 113-122 are compositionally biased toward polar residues; it reads IDSPNYQHTL.

Belongs to the PIERCE2 family. As to quaternary structure, microtubule inner protein component of sperm flagellar doublet microtubules. Interacts with CFAP53, ODAD1 and ODAD3; the interactions link the outer dynein arms docking complex (ODA-DC) to the internal microtubule inner proteins (MIP) in cilium axoneme.

It is found in the cytoplasm. The protein localises to the cytoskeleton. The protein resides in the cilium axoneme. It localises to the flagellum axoneme. Microtubule inner protein involved in the attachment of outer dynein arms (ODAs) to dynein-decorated doublet microtubules (DMTs) in cilia axoneme, which is required for motile cilia beating. The chain is Piercer of microtubule wall 2 protein from Mus musculus (Mouse).